We begin with the raw amino-acid sequence, 299 residues long: Zinc finger protein-like 1 homolog (299 aa).

The segment at 1 to 43 adopts a B box-type; degenerate zinc-finger fold; it reads MGLCKCPKRLVTNQFCFEHRVNVCEHCMVQSHPKCIVQSYLQW. The segment at 53–101 adopts an RING-type; atypical zinc-finger fold; sequence CTLCGTTLEQGDCVRLVCYHVFHWDCLNARQAALPANTAPRGHQCPACS. Residues 200 to 231 form a disordered region; it reads AGDYASSRRPLLPRQSPIGGTDRDDNKYQRRT. Ser215 bears the Phosphoserine mark. Residues 256–276 traverse the membrane as a helical segment; that stretch reads WFLVTAGILAFVLFVYLMAWL.

Belongs to the ZFPL1 family.

Its subcellular location is the membrane. The chain is Zinc finger protein-like 1 homolog from Drosophila melanogaster (Fruit fly).